Consider the following 208-residue polypeptide: Uracil phosphoribosyltransferase (208 aa).

5-phospho-alpha-D-ribose 1-diphosphate is bound by residues Arg78, Arg103, and 130 to 138; that span reads DPMFATGGT. Uracil-binding positions include Ile193 and 198-200; that span reads GDA. A 5-phospho-alpha-D-ribose 1-diphosphate-binding site is contributed by Asp199.

This sequence belongs to the UPRTase family. The cofactor is Mg(2+).

The catalysed reaction is UMP + diphosphate = 5-phospho-alpha-D-ribose 1-diphosphate + uracil. The protein operates within pyrimidine metabolism; UMP biosynthesis via salvage pathway; UMP from uracil: step 1/1. With respect to regulation, allosterically activated by GTP. Its function is as follows. Catalyzes the conversion of uracil and 5-phospho-alpha-D-ribose 1-diphosphate (PRPP) to UMP and diphosphate. In Campylobacter jejuni subsp. jejuni serotype O:6 (strain 81116 / NCTC 11828), this protein is Uracil phosphoribosyltransferase.